Reading from the N-terminus, the 299-residue chain is 21S rRNA pseudouridine(2819) synthase (299 aa).

The active site involves Asp106.

The protein belongs to the pseudouridine synthase RluA family.

It is found in the mitochondrion. It catalyses the reaction uridine(2819) in 21S rRNA = pseudouridine(2819) in 21S rRNA. Pseudouridylate synthase responsible for the pseudouridine-2819 formation in mitochondrial 21S rRNA. May modulate the efficiency or the fidelity of the mitochondrial translation machinery. In Kluyveromyces lactis (strain ATCC 8585 / CBS 2359 / DSM 70799 / NBRC 1267 / NRRL Y-1140 / WM37) (Yeast), this protein is 21S rRNA pseudouridine(2819) synthase (PUS5).